A 570-amino-acid chain; its full sequence is Methionine--tRNA ligase (570 aa).

The short motif at 11–21 is the 'HIGH' region element; the sequence is PYVQTVPHLGN. Positions 143, 146, 156, and 159 each coordinate Zn(2+). Residues 333 to 337 carry the 'KMSKS' region motif; it reads KFSKS. An ATP-binding site is contributed by Lys-336.

It belongs to the class-I aminoacyl-tRNA synthetase family. MetG type 1 subfamily. It depends on Zn(2+) as a cofactor.

It localises to the cytoplasm. The catalysed reaction is tRNA(Met) + L-methionine + ATP = L-methionyl-tRNA(Met) + AMP + diphosphate. Its function is as follows. Is required not only for elongation of protein synthesis but also for the initiation of all mRNA translation through initiator tRNA(fMet) aminoacylation. This is Methionine--tRNA ligase from Pyrobaculum calidifontis (strain DSM 21063 / JCM 11548 / VA1).